The primary structure comprises 82 residues: Fibroblast growth factor 8 (82 aa).

Asparagine 68 carries N-linked (GlcNAc...) asparagine glycosylation.

The protein belongs to the heparin-binding growth factors family. As to quaternary structure, monomer. Homodimer. Interacts with FGFR1, FGFR2, FGFR3 and FGFR4. Affinity between fibroblast growth factors (FGFs) and their receptors is increased by heparan sulfate glycosaminoglycans that function as coreceptors.

It localises to the secreted. In terms of biological role, plays an important role in the regulation of embryonic development, cell proliferation, cell differentiation and cell migration. Required for normal brain, eye, ear and limb development during embryogenesis. Required for normal development of the gonadotropin-releasing hormone (GnRH) neuronal system. Plays a role in neurite outgrowth in hippocampal cells. The sequence is that of Fibroblast growth factor 8 (FGF8) from Canis lupus familiaris (Dog).